The sequence spans 381 residues: Early boundary activity protein 2 (381 aa).

Residues Asn210 to Lys245 form a disordered region. Positions Pro268 to Tyr365 constitute a BEN domain.

In terms of assembly, the heterotrimeric Elba complex consists of Elba1, Elba2 and Elba3.

Its subcellular location is the nucleus. Functionally, the heterotrimeric Elba complex is required for chromatin domain boundary function during early embryogenesis. It binds to a 8-bp sequence 5'-CCAATAAG-3' in the Fab-7 insulator or boundary element in the bithorax complex and contributes to its insulator or boundary activity. Elba2 can act as a transcriptional repressor and binds the palindromic sequence 5'-CCAATTGG-3' to mediate transcriptional repression. This chain is Early boundary activity protein 2, found in Drosophila melanogaster (Fruit fly).